The chain runs to 223 residues: Ribonuclease 3 (223 aa).

The 124-residue stretch at 4-127 (LENLQKLLGY…VMGAVYLEAG (124 aa)) folds into the RNase III domain. Glutamate 40 serves as a coordination point for Mg(2+). Residue aspartate 44 is part of the active site. The Mg(2+) site is built by aspartate 113 and glutamate 116. Glutamate 116 is a catalytic residue. The DRBM domain occupies 154-223 (DYKTALQEIT…AKIALEKMKK (70 aa)).

This sequence belongs to the ribonuclease III family. As to quaternary structure, homodimer. Mg(2+) is required as a cofactor.

The protein resides in the cytoplasm. It carries out the reaction Endonucleolytic cleavage to 5'-phosphomonoester.. Its function is as follows. Digests double-stranded RNA. Involved in the processing of primary rRNA transcript to yield the immediate precursors to the large and small rRNAs (23S and 16S). Processes some mRNAs, and tRNAs when they are encoded in the rRNA operon. Processes pre-crRNA and tracrRNA of type II CRISPR loci if present in the organism. This is Ribonuclease 3 from Campylobacter curvus (strain 525.92).